Reading from the N-terminus, the 95-residue chain is Secretoglobin family 1C member 1 (95 aa).

The signal sequence occupies residues 1 to 23 (MKGSSALLLVALSLLCVCGLTRA).

Belongs to the secretoglobin family.

It localises to the secreted. The sequence is that of Secretoglobin family 1C member 1 (Scgb1c1) from Mus musculus (Mouse).